Here is a 363-residue protein sequence, read N- to C-terminus: Protein-glutamate methylesterase/protein-glutamine glutaminase 2 (363 aa).

The region spanning 6-123 (RVLIVDDSAS…AQFLLESKIH (118 aa)) is the Response regulatory domain. D57 is subject to 4-aspartylphosphate. Residues 172–363 (ARTTESVICI…AMEILRAGNR (192 aa)) enclose the CheB-type methylesterase domain. Residues S184, H210, and D306 contribute to the active site.

This sequence belongs to the CheB family. Post-translationally, phosphorylated by CheA. Phosphorylation of the N-terminal regulatory domain activates the methylesterase activity.

The protein localises to the cytoplasm. The catalysed reaction is [protein]-L-glutamate 5-O-methyl ester + H2O = L-glutamyl-[protein] + methanol + H(+). It catalyses the reaction L-glutaminyl-[protein] + H2O = L-glutamyl-[protein] + NH4(+). Its function is as follows. Involved in chemotaxis. Part of a chemotaxis signal transduction system that modulates chemotaxis in response to various stimuli. Catalyzes the demethylation of specific methylglutamate residues introduced into the chemoreceptors (methyl-accepting chemotaxis proteins or MCP) by CheR. Also mediates the irreversible deamidation of specific glutamine residues to glutamic acid. This is Protein-glutamate methylesterase/protein-glutamine glutaminase 2 from Rhodospirillum rubrum (strain ATCC 11170 / ATH 1.1.1 / DSM 467 / LMG 4362 / NCIMB 8255 / S1).